Consider the following 542-residue polypeptide: Chaperonin GroEL (542 aa).

Residues 29-32 (TLGP), 86-90 (DGTTT), Gly-413, 477-479 (NAA), and Asp-493 each bind ATP.

Belongs to the chaperonin (HSP60) family. In terms of assembly, forms a cylinder of 14 subunits composed of two heptameric rings stacked back-to-back. Interacts with the co-chaperonin GroES.

Its subcellular location is the cytoplasm. The enzyme catalyses ATP + H2O + a folded polypeptide = ADP + phosphate + an unfolded polypeptide.. In terms of biological role, together with its co-chaperonin GroES, plays an essential role in assisting protein folding. The GroEL-GroES system forms a nano-cage that allows encapsulation of the non-native substrate proteins and provides a physical environment optimized to promote and accelerate protein folding. This Heliobacterium modesticaldum (strain ATCC 51547 / Ice1) protein is Chaperonin GroEL.